Reading from the N-terminus, the 362-residue chain is Type-2 angiotensin II receptor (362 aa).

Topologically, residues 1–44 are extracellular; it reads MKANFSLATISKNITSSLHVGFVNISSNESTFNCSHKPSDKHLD. Asn-4, Asn-13, Asn-24, Asn-28, and Asn-33 each carry an N-linked (GlcNAc...) asparagine glycan. 2 disulfides stabilise this stretch: Cys-34-Cys-289 and Cys-116-Cys-194. The helical transmembrane segment at 45 to 69 threads the bilayer; the sequence is AIPVLYYIIFGVGFLVNTIVVTLFC. The Cytoplasmic portion of the chain corresponds to 70–79; that stretch reads CQKGPKKVSS. A helical transmembrane segment spans residues 80-103; sequence IYIFNLAVADLLLLATLPLWATYY. Residues Tyr-102 and Tyr-103 each coordinate angiotensin II. The Extracellular portion of the chain corresponds to 104 to 113; it reads SHRYDWIFGP. Residues 114 to 139 traverse the membrane as a helical segment; the sequence is VMCKVFGSFLTLNMFASIFFITCMSV. Over 140 to 158 the chain is Cytoplasmic; that stretch reads DRYQSVIYPFLSQRRNPWQ. A helical membrane pass occupies residues 159 to 180; it reads ASYIVPLVWCMACLSSLPTFYF. Angiotensin II is bound by residues Arg-181, Tyr-203, and Lys-214. At 181-205 the chain is on the extracellular side; the sequence is RDVRTIEYLGVNACIMAFPPEKYAQ. The chain crosses the membrane as a helical span at residues 206–231; that stretch reads WSAGIALMKNILGFIIPLIFIATCYF. Topologically, residues 232-256 are cytoplasmic; that stretch reads GIRKHLLKTNSYGKNRITRDQVLKM. A helical transmembrane segment spans residues 257 to 280; that stretch reads AAAVVLAFIICWLPFHVLTFLDAL. Asp-278 serves as a coordination point for angiotensin II. Residues 281-293 lie on the Extracellular side of the membrane; sequence AWMGVINSCEVIA. Residues 294–319 form a helical membrane-spanning segment; sequence VIDLALPFAILLGFTNSCINPFLYCF. Angiotensin II is bound at residue Asp-296. Topologically, residues 320–362 are cytoplasmic; the sequence is VGNRFQQKLRRVFRVPITWLQGKRENGSCGKSSSFREMETFVS. A helix VIII region spans residues 323–332; sequence RFQQKLRRVF.

It belongs to the G-protein coupled receptor 1 family. In terms of assembly, interacts with MTUS1.

Its subcellular location is the cell membrane. Functionally, receptor for angiotensin II, a vasoconstricting peptide. Signals primarily via a non-canonical G-protein- and beta-arrestin independent pathways. Cooperates with MTUS1 to inhibit ERK2 activation and cell proliferation. The protein is Type-2 angiotensin II receptor (AGTR2) of Ovis aries (Sheep).